A 146-amino-acid chain; its full sequence is Phospholipase A2 147 (146 aa).

Residues 1 to 19 (MYPAHLLVLLAVCVSLLGA) form the signal peptide. The propeptide occupies 20 to 27 (ASVPPQPL). Intrachain disulfides connect C38–C98, C54–C145, C56–C72, C71–C126, C78–C119, C87–C112, and C105–C117. 3 residues coordinate Ca(2+): Y55, G57, and G59. H75 is an active-site residue. D76 is a binding site for Ca(2+). D120 is a catalytic residue.

It belongs to the phospholipase A2 family. Group I subfamily. D49 sub-subfamily. Requires Ca(2+) as cofactor. As to expression, expressed by the venom gland.

The protein resides in the secreted. It carries out the reaction a 1,2-diacyl-sn-glycero-3-phosphocholine + H2O = a 1-acyl-sn-glycero-3-phosphocholine + a fatty acid + H(+). In terms of biological role, snake venom phospholipase A2 (PLA2) that inhibits collagen-induced platelet aggregation. PLA2 catalyzes the calcium-dependent hydrolysis of the 2-acyl groups in 3-sn-phosphoglycerides. This is Phospholipase A2 147 from Drysdalia coronoides (White-lipped snake).